The primary structure comprises 420 residues: MMIQLIATPSNALVDEPVSIRATGLPPSQIVTIKATVKDENDNVFQSQAFYKTNEAGEVDLEKTPALGGDYVGVHPMGLFFSLKPKKAFHRLMKKDVMNSPLCICLDLYDSVNWLETVRIPSKASQRVQRWFVGPGVKREQIQEGRVRGALFLPPGKGPFPGIIDLFGLIGGLVEFRASLLASHGFAVLALAYFAYEDLPEKPQEVDLEYFEEAANFLLSHPKIQQPGIGVISTSKGAEIGLAMACYLKQVIATVCINGPTTITIFPLRYQDLVMTPIHPALERIQVHDSGALLFRYTTQYLHNKLNSQNILPVEKAQGKILFIVGENDECLDSKLHAQKAMDRLQRHGRSSGRMLAYPGAGHLIEPPYSPVCFVAWFPVLGQPMCFGGDLMAHAAAQEHSWREIQKFFRKHLLQSGSKL.

Active-site charge relay system residues include S235, D329, and H363. The short motif at 418 to 420 (SKL) is the Microbody targeting signal element.

The protein belongs to the C/M/P thioester hydrolase family.

It localises to the peroxisome. Functionally, acyltransferase which efficiently conjugates very long-chain and long-chain fatty acids to taurine. Shows no conjugation activity in the presence of glycine. In Mus musculus (Mouse), this protein is Acyl-coenzyme A amino acid N-acyltransferase 2.